Reading from the N-terminus, the 491-residue chain is Fibrinogen beta chain (491 aa).

The N-terminal stretch at 1 to 30 (MKRMVSWSFHKLKTMKHLLLLLLCVFLVKS) is a signal peptide. Gln-31 bears the Pyrrolidone carboxylic acid mark. Residues 44–75 (RGHRPLDKKREEAPSLRPAPPPISGGGYRARP) are disordered. A beta-chain polymerization, binding distal domain of another fibrin region spans residues 45 to 47 (GHR). Basic and acidic residues predominate over residues 47 to 57 (RPLDKKREEAP). Residues 157–222 (KRQKQVKDNE…ESDVSAQMEY (66 aa)) adopt a coiled-coil conformation. 2 disulfides stabilise this stretch: Cys-231–Cys-316 and Cys-241–Cys-270. A Fibrinogen C-terminal domain is found at 232 to 488 (NIPVVSGKEC…KMSMKIRPFF (257 aa)). N-linked (GlcNAc...) asparagine glycosylation is present at Asn-394. Residues Cys-424 and Cys-437 are joined by a disulfide bond.

As to quaternary structure, heterohexamer; disulfide linked. Contains 2 sets of 3 non-identical chains (alpha, beta and gamma). The 2 heterotrimers are in head to head conformation with the N-termini in a small central domain. In terms of processing, conversion of fibrinogen to fibrin is triggered by thrombin, which cleaves fibrinopeptides A and B from alpha and beta chains, and thus exposes the N-terminal polymerization sites responsible for the formation of the soft clot. The soft clot is converted into the hard clot by factor XIIIA which catalyzes the epsilon-(gamma-glutamyl)lysine cross-linking between gamma chains (stronger) and between alpha chains (weaker) of different monomers. As to expression, detected in blood plasma (at protein level).

Its subcellular location is the secreted. In terms of biological role, cleaved by the protease thrombin to yield monomers which, together with fibrinogen alpha (FGA) and fibrinogen gamma (FGG), polymerize to form an insoluble fibrin matrix. Fibrin has a major function in hemostasis as one of the primary components of blood clots. In addition, functions during the early stages of wound repair to stabilize the lesion and guide cell migration during re-epithelialization. Was originally thought to be essential for platelet aggregation, based on in vitro studies using anticoagulated blood. However subsequent studies have shown that it is not absolutely required for thrombus formation in vivo. Enhances expression of SELP in activated platelets. Maternal fibrinogen is essential for successful pregnancy. Fibrin deposition is also associated with infection, where it protects against IFNG-mediated hemorrhage. May also facilitate the antibacterial immune response via both innate and T-cell mediated pathways. This chain is Fibrinogen beta chain (FGB), found in Homo sapiens (Human).